Reading from the N-terminus, the 358-residue chain is MAPQNLSTFCLLLLYLIGAVIAGRDFYKILGVPRSASIKDIKKAYRKLALQLHPDRNPDDPQAQEKFQDLGAAYEVLSDSEKRKQYDTYGEEGLKDGHQSSHGDIFSHFFGDFGFMFGGAPRQQDRNIPRGSDIIVDLEVTLEEVYAGNFVEVVRNKPVARQAPGKRKCNCRQEMRTTQLGPGRFQMTQEVVCDECPNVKLVNEERTLEVEIEPGVRDGMEYPFIGEGEPHVDGEPGDLRFRIKVVKHRIFERRGDDLYTNVTVSLVEALVGFEMDITHLDGHKVHISRDKITRPGAKLWKKGEGLPNFDNNNIKGSLIITFDVDFPKEQLTEEAKEGIKQLLKQGPVQKVYNGLQGY.

The first 22 residues, Met1–Ala22, serve as a signal peptide directing secretion. In terms of domain architecture, J spans Asp25–Gly90. Phosphothreonine is present on Thr188. Asn261 carries N-linked (GlcNAc...) asparagine glycosylation.

Part of a large chaperone multiprotein complex comprising DNAJB11, HSP90B1, HSPA5, HYOU, PDIA2, PDIA4, PDIA6, PPIB, SDF2L1, UGGT1 and very small amounts of ERP29, but not, or at very low levels, CALR nor CANX. Binds to denatured substrates in an ATP-independent manner. Interacts via the J domain with HSPA5 in an ATP-dependent manner. Contains high-mannose Endo H-sensitive carbohydrates. Post-translationally, cys-169, Cys-171, Cys-193 and Cys-196 form intramolecular disulfide bonds. The preferential partner for each Cys is not known.

The protein localises to the endoplasmic reticulum lumen. As a co-chaperone for HSPA5 it is required for proper folding, trafficking or degradation of proteins. Binds directly to both unfolded proteins that are substrates for ERAD and nascent unfolded peptide chains, but dissociates from the HSPA5-unfolded protein complex before folding is completed. May help recruiting HSPA5 and other chaperones to the substrate. Stimulates HSPA5 ATPase activity. It is necessary for maturation and correct trafficking of PKD1. This is DnaJ homolog subfamily B member 11 (Dnajb11) from Rattus norvegicus (Rat).